The sequence spans 241 residues: Corrinoid adenosyltransferase MMAB (241 aa).

The transit peptide at 1–26 (MAVWGPGGRLGLRGCLGARKLLCPRF) directs the protein to the mitochondrion. The segment at 27 to 69 (QSRGPQGVEDGDRPQPSSKTPKVPKIYTKTGDKGFSSTFTGER) is disordered. Residues 54 to 63 (TKTGDKGFSS) and Lys72 contribute to the ATP site. Phosphoserine is present on Ser128. 184 to 188 (RRAER) is an ATP binding site. Lys205 is subject to N6-succinyllysine. An ATP-binding site is contributed by Asn208. The residue at position 224 (Lys224) is an N6-acetyllysine; alternate. At Lys224 the chain carries N6-succinyllysine; alternate.

Belongs to the Cob(I)alamin adenosyltransferase family. In terms of assembly, homotrimer.

The protein localises to the mitochondrion. The catalysed reaction is cob(I)alamin-[corrinoid adenosyltransferase] + ATP = apo-[corrinoid adenosyltransferase] + adenosylcob(III)alamin + triphosphate. Its function is as follows. Converts cob(I)alamin to adenosylcobalamin (adenosylcob(III)alamin), a coenzyme for methylmalonyl-CoA mutase, therefore participates in the final step of the vitamin B12 conversion. Generates adenosylcobalamin (AdoCbl) and directly delivers the cofactor to MUT in a transfer that is stimulated by ATP-binding to MMAB and gated by MMAA. The sequence is that of Corrinoid adenosyltransferase MMAB from Bos taurus (Bovine).